A 135-amino-acid polypeptide reads, in one-letter code: Large-conductance mechanosensitive channel (135 aa).

2 consecutive transmembrane segments (helical) span residues 10-30 and 76-96; these read FAMK…AAFG and GAFI…FCAI.

Belongs to the MscL family. As to quaternary structure, homopentamer.

It localises to the cell inner membrane. In terms of biological role, channel that opens in response to stretch forces in the membrane lipid bilayer. May participate in the regulation of osmotic pressure changes within the cell. In Proteus mirabilis (strain HI4320), this protein is Large-conductance mechanosensitive channel.